A 259-amino-acid polypeptide reads, in one-letter code: Phosphate import ATP-binding protein PstB (259 aa).

An ABC transporter domain is found at 5–248 (IEVNDLNVYY…NIIFSNPSAQ (244 aa)). 37–44 (GPSGCGKS) provides a ligand contact to ATP.

The protein belongs to the ABC transporter superfamily. Phosphate importer (TC 3.A.1.7) family. The complex is composed of two ATP-binding proteins (PstB), two transmembrane proteins (PstC and PstA) and a solute-binding protein (PstS).

The protein localises to the cell membrane. The catalysed reaction is phosphate(out) + ATP + H2O = ADP + 2 phosphate(in) + H(+). In terms of biological role, part of the ABC transporter complex PstSACB involved in phosphate import. Responsible for energy coupling to the transport system. The chain is Phosphate import ATP-binding protein PstB from Leifsonia xyli subsp. xyli (strain CTCB07).